The primary structure comprises 106 residues: Large ribosomal subunit protein uL24 (106 aa).

It belongs to the universal ribosomal protein uL24 family. Part of the 50S ribosomal subunit.

Functionally, one of two assembly initiator proteins, it binds directly to the 5'-end of the 23S rRNA, where it nucleates assembly of the 50S subunit. Its function is as follows. One of the proteins that surrounds the polypeptide exit tunnel on the outside of the subunit. In Syntrophus aciditrophicus (strain SB), this protein is Large ribosomal subunit protein uL24.